A 151-amino-acid chain; its full sequence is MQKTTRTMPAHKHVALVAHDNCKPELLRWVKENKEKLQSHFLYATGTTGHMLSKETGLAIKSMISGPMGGDQQLGALISEGNIDVLVFFWDPLNAVPHDPDVKALLRIASVWNIPVATNRATAKFLFNSPLIDQEVDIEVPDYDAYLAERT.

In terms of domain architecture, MGS-like spans 6–151 (RTMPAHKHVA…DYDAYLAERT (146 aa)). Residues histidine 19, lysine 23, 45-48 (TGTT), and 65-66 (SG) each bind substrate. The active-site Proton donor/acceptor is the aspartate 71. Position 98 (histidine 98) interacts with substrate.

Belongs to the methylglyoxal synthase family.

It carries out the reaction dihydroxyacetone phosphate = methylglyoxal + phosphate. Functionally, catalyzes the formation of methylglyoxal from dihydroxyacetone phosphate. In Vibrio campbellii (strain ATCC BAA-1116), this protein is Methylglyoxal synthase.